The chain runs to 292 residues: MNFSEQQLINWSRPVSTTEDLKCQNAITQITAALRAKFGNRVTIFLQGSYRNNTNVRQNSDVDIVMRYDDAFYPDLQRLSESDKAIYNAQRTYSGYNFDELKADTEEALRNVFTTSVERKNKCIQVNGNSNRITADVIPCFVLKRFSTLQSVEAEGIKFYSDDNKEIISFPEQHYSNGTEKTNQTYRLYKRMVRILKVVNYRLIDDGEIADNLVSSFFIECLVYNVPNNQFISGNYTQTLRNVIVKIYEDMKNNADYTEVNRLFWLFSNRSPRTRQDALGFMQKCWNYLGYQ.

Gln-47 is a binding site for ATP. 48-52 (GSYRN) lines the GTP pocket. 2 residues coordinate Mg(2+): Asp-61 and Asp-63. ATP contacts are provided by residues Asp-63, 121–122 (NK), and Asp-136. Asp-136 provides a ligand contact to Mg(2+). Residues Lys-197 and Ser-216 each coordinate GTP.

Belongs to the CD-NTase family. E01 subfamily. Mg(2+) serves as cofactor.

The catalysed reaction is 2 ATP = 3',3'-c-di-AMP + 2 diphosphate. The enzyme catalyses 2 GTP = 3',3'-c-di-GMP + 2 diphosphate. It catalyses the reaction GTP + ATP = 3',3'-cGAMP + 2 diphosphate. In terms of biological role, cyclic nucleotide synthase (second messenger synthase) of a CBASS antivirus system. CBASS (cyclic oligonucleotide-based antiphage signaling system) provides immunity against bacteriophage. The CD-NTase protein synthesizes cyclic nucleotides in response to infection; these serve as specific second messenger signals. The signals activate a diverse range of effectors, leading to bacterial cell death and thus abortive phage infection. A type I-A(GA) CBASS system. Its function is as follows. Cyclic dinucleotide synthase that catalyzes the synthesis of 3'3'-cyclic GMP-AMP (cGAMP) from GTP and ATP, and of c-di-AMP and c-di-GMP, that are second messengers for cell signal transduction. This Elizabethkingia meningoseptica (Chryseobacterium meningosepticum) protein is Cyclic dipurine nucleotide synthase.